Consider the following 235-residue polypeptide: Sugar fermentation stimulation protein homolog (235 aa).

This sequence belongs to the SfsA family.

The sequence is that of Sugar fermentation stimulation protein homolog from Serratia proteamaculans (strain 568).